A 439-amino-acid polypeptide reads, in one-letter code: MPMHDQTSYMTGFGNEFATEAVAGSLPVGQNSPQRVAHGLYAEQLSGTAFTAPRGENRRSWLYRIRPAAVHGRFSLIEQSRLHNDFGGGPVPPDQMRWSPLPLPATRTDFVDGLYTMAGNGSPEAMTGVAVHLYAANASMRDRFFYNADGELLLVPQLGRLRVCTELGVLELEPQQIGVIPRGLRFRVELLDSEARGYVCENFGGLLRLPELGPIGANGLANPRDFQTPRAAFEQREGRFELVAKFQGHLWRADIGHSPLDVVAWHGNYAPYRYDLRRFNTIGSISFDHPDPSIFTVLTSPSDTHGTANMDFAIFPPRWLVAQHTFRPPWFHRNVASEFMGLVHGVYDAKAEGFAPGGASLHNCMSGHGPDAATFDKASQADLTRPDVIADTMAFMFETRAVLRPTQQALNAAHRQADYQQCWSGLRAAFQPPTTEDAT.

Catalysis depends on H289, which acts as the Proton acceptor. Residues H332 and E338 each contribute to the Fe cation site. Homogentisate contacts are provided by Y347 and H368. Residue H368 coordinates Fe cation.

The protein belongs to the homogentisate dioxygenase family. As to quaternary structure, hexamer; dimer of trimers. It depends on Fe cation as a cofactor.

It catalyses the reaction homogentisate + O2 = 4-maleylacetoacetate + H(+). The protein operates within amino-acid degradation; L-phenylalanine degradation; acetoacetate and fumarate from L-phenylalanine: step 4/6. Its function is as follows. Involved in the catabolism of homogentisate (2,5-dihydroxyphenylacetate or 2,5-OH-PhAc), a central intermediate in the degradation of phenylalanine and tyrosine. Catalyzes the oxidative ring cleavage of the aromatic ring of homogentisate to yield maleylacetoacetate. The chain is Homogentisate 1,2-dioxygenase from Xanthomonas euvesicatoria pv. vesicatoria (strain 85-10) (Xanthomonas campestris pv. vesicatoria).